The primary structure comprises 612 residues: Transcription factor unc-37 (612 aa).

The segment at Phe143 to Gln228 is disordered. A compositionally biased stretch (gly residues) spans Gly150–Gly159. The segment at Gly153–Ala196 is CCN domain. Positions Asp171–Thr182 are enriched in acidic residues. A compositionally biased stretch (polar residues) spans Asp202–Ser221. WD repeat units follow at residues Gly308 to Thr339, Leu372 to Asp402, Thr414 to Asp444, Gly456 to Asp486, Gln538 to Arg568, and Lys579 to Ala609.

The protein belongs to the WD repeat Groucho/TLE family. In terms of assembly, interacts with unc-4. Interacts with ref-1. May interact with mls-1.

The protein localises to the nucleus. Transcriptional corepressor that functions with the neural specificity gene unc-4 to govern motor neuron identity. In concert with unc-4, represses the expression of VB-specific genes such as ceh-12, thereby preventing the adoption of VB motor neuron fate. May function with transcription factor mls-1 to promote uterine muscle specification and formation. The chain is Transcription factor unc-37 (unc-37) from Caenorhabditis elegans.